The chain runs to 842 residues: Outer membrane usher protein LpfC (842 aa).

Residues 1-21 form the signal peptide; it reads MTWTHLPLGNKTSRFTQSALA. A disulfide bond links Cys-819 and Cys-841.

Belongs to the fimbrial export usher family.

It is found in the cell outer membrane. Its function is as follows. Involved in the export and assembly of LpfA fimbrial subunits across the outer membrane. This is Outer membrane usher protein LpfC (lpfC) from Salmonella typhimurium (strain LT2 / SGSC1412 / ATCC 700720).